The sequence spans 345 residues: Uroporphyrinogen decarboxylase (345 aa).

Substrate-binding positions include 27–31 (RQAGR), F46, D76, Y152, S207, and H320.

The protein belongs to the uroporphyrinogen decarboxylase family. In terms of assembly, homodimer.

Its subcellular location is the cytoplasm. The enzyme catalyses uroporphyrinogen III + 4 H(+) = coproporphyrinogen III + 4 CO2. It functions in the pathway porphyrin-containing compound metabolism; protoporphyrin-IX biosynthesis; coproporphyrinogen-III from 5-aminolevulinate: step 4/4. Its function is as follows. Catalyzes the decarboxylation of four acetate groups of uroporphyrinogen-III to yield coproporphyrinogen-III. This Geobacillus sp. (strain WCH70) protein is Uroporphyrinogen decarboxylase.